The primary structure comprises 59 residues: uncharacterized protein (59 aa).

Residues 7–27 (LLLLVAIALISAFALTVTGVV) traverse the membrane as a helical segment.

The protein localises to the membrane. This is an uncharacterized protein from Pyrobaculum aerophilum (strain ATCC 51768 / DSM 7523 / JCM 9630 / CIP 104966 / NBRC 100827 / IM2).